The sequence spans 452 residues: Caspase-2 (452 aa).

At A2 the chain carries N-acetylalanine. The propeptide occupies 2–169; the sequence is AAPSAGSWST…TVEHSLDNKD (168 aa). In terms of domain architecture, CARD spans 32-121; sequence MHPHHQETLK…GHLEDMLLTT (90 aa). The residue at position 157 (S157) is a Phosphoserine. Active-site residues include H277 and C320. Positions 326 to 333 are excised as a propeptide; the sequence is DRGVDQQD. Basic and acidic residues predominate over residues 327 to 336; it reads RGVDQQDGKN. The interval 327–354 is disordered; that stretch reads RGVDQQDGKNHAGSPGCEESDAGKEKLP. The residue at position 340 (S340) is a Phosphoserine.

The protein belongs to the peptidase C14A family. As to quaternary structure, heterotetramer that consists of two anti-parallel arranged heterodimers, each one formed by a p18 subunit and a p12 subunit. Forms a complex named the PIDDosome with PIDD1 and CRADD. Interacts with NOL3 (via CARD domain); inhibits CASP2 activity in a phosphorylation-dependent manner. In terms of processing, the mature protease can process its own propeptide, but not that of other caspases. As to expression, expressed at higher levels in the embryonic lung, liver and kidney than in the heart and brain. In adults, higher level expression is seen in the placenta, lung, kidney, and pancreas than in the heart, brain, liver and skeletal muscle.

The catalysed reaction is Strict requirement for an Asp residue at P1, with 316-Asp being essential for proteolytic activity and has a preferred cleavage sequence of Val-Asp-Val-Ala-Asp-|-.. Is a regulator of the cascade of caspases responsible for apoptosis execution. Might function by either activating some proteins required for cell death or inactivating proteins necessary for cell survival. Associates with PIDD1 and CRADD to form the PIDDosome, a complex that activates CASP2 and triggers apoptosis in response to genotoxic stress. Functionally, acts as a positive regulator of apoptosis. In terms of biological role, acts as a negative regulator of apoptosis. Its function is as follows. May function as an endogenous apoptosis inhibitor that antagonizes caspase activation and cell death. The protein is Caspase-2 (CASP2) of Homo sapiens (Human).